The chain runs to 189 residues: MSTVKEAAHRLSKSEMSLYAVLDLKKGASPEDFKKSYSHSALLPHPPFEYHLGRKLALRYHPDKNPGNAQAAEIFKEINAAHAILSDSKKRKIYDQHGSLGIYLYDHFGEEGVRYYFILNSCWFKTLVILCTLLTCCCFCCCCCFCCGALKPPPEQDSGRKYQQNVQSQPPRSGAKCDFRSEENSEDDF.

The J domain occupies 17 to 98 (SLYAVLDLKK…KKRKIYDQHG (82 aa)). Residues 154–189 (PEQDSGRKYQQNVQSQPPRSGAKCDFRSEENSEDDF) form a disordered region. Polar residues predominate over residues 161 to 171 (KYQQNVQSQPP).

Palmitoylated. As to expression, testis specific.

The protein resides in the membrane. This chain is DnaJ homolog subfamily C member 5G (DNAJC5G), found in Homo sapiens (Human).